A 122-amino-acid polypeptide reads, in one-letter code: Serum amyloid A-1 protein (122 aa).

The N-terminal stretch at 1–19 (MKLLSGLLLCSLVLGVSSQ) is a signal peptide. The tract at residues 20 to 45 (RWFSFIGEATQGAWDMWRAYSDMREA) is important for amyloid formation. The segment at 87–122 (MGHGAEDSMADQAANEWGRSGKDPNHFRPKGLPDKY) is disordered. Positions 105–122 (RSGKDPNHFRPKGLPDKY) are enriched in basic and acidic residues.

The protein belongs to the SAA family. In terms of assembly, homohexamer; dimer of trimers. Can form amyloid fibrils after partial proteolysis; the native, undenatured protein does not form amyloid fibrils (in vitro). Apolipoprotein of the HDL complex. Binds to heparin. In terms of tissue distribution, detected in liver.

It is found in the secreted. In terms of biological role, major acute phase protein. The polypeptide is Serum amyloid A-1 protein (SAA1) (Oryctolagus cuniculus (Rabbit)).